The following is a 173-amino-acid chain: Telomerase RNA component interacting RNase (173 aa).

The segment covering Met1–Gly12 has biased composition (basic and acidic residues). The tract at residues Met1–Gly119 is disordered. Composition is skewed to low complexity over residues Glu14 to Arg23 and Ser43 to Val52. The segment covering Leu64–Glu79 has biased composition (basic and acidic residues). Over residues Pro80 to Pro90 the composition is skewed to pro residues. Lys143 carries the post-translational modification N6-acetyllysine.

As to quaternary structure, part of the telomerase RNA 3' end complex which contains about 488 proteins.

In terms of biological role, exoribonuclease that is part of the telomerase RNA 3' end processing complex and which has the ability to cleave all four unpaired RNA nucleotides from the 5' end or 3' end with higher efficiency for purine bases. The sequence is that of Telomerase RNA component interacting RNase from Mus musculus (Mouse).